Here is a 56-residue protein sequence, read N- to C-terminus: Ribosome modulation factor (56 aa).

This sequence belongs to the ribosome modulation factor family.

The protein resides in the cytoplasm. In terms of biological role, during stationary phase, converts 70S ribosomes to an inactive dimeric form (100S ribosomes). The polypeptide is Ribosome modulation factor (Serratia proteamaculans (strain 568)).